A 419-amino-acid polypeptide reads, in one-letter code: UDP-N-acetylglucosamine 1-carboxyvinyltransferase (419 aa).

22–23 contributes to the phosphoenolpyruvate binding site; sequence KN. Arginine 91 is a UDP-N-acetyl-alpha-D-glucosamine binding site. The active-site Proton donor is cysteine 115. Residue cysteine 115 is modified to 2-(S-cysteinyl)pyruvic acid O-phosphothioketal. UDP-N-acetyl-alpha-D-glucosamine contacts are provided by residues 120-124, 160-163, aspartate 305, and valine 327; these read RPVDL and KVSV.

It belongs to the EPSP synthase family. MurA subfamily.

The protein resides in the cytoplasm. The enzyme catalyses phosphoenolpyruvate + UDP-N-acetyl-alpha-D-glucosamine = UDP-N-acetyl-3-O-(1-carboxyvinyl)-alpha-D-glucosamine + phosphate. It participates in cell wall biogenesis; peptidoglycan biosynthesis. Functionally, cell wall formation. Adds enolpyruvyl to UDP-N-acetylglucosamine. This is UDP-N-acetylglucosamine 1-carboxyvinyltransferase from Salmonella dublin (strain CT_02021853).